The primary structure comprises 88 residues: MQFLVLALASLAAAAPSIKLRAPSDVCPALDTPLCCQADVLGVLDLTCEAPSDDTSVSNFEAACATTGLTARCCTLPLLGEALLCTTP.

Positions 1–14 (MQFLVLALASLAAA) are cleaved as a signal peptide. Intrachain disulfides connect C27/C73, C35/C64, C36/C48, and C74/C85.

This sequence belongs to the cerato-ulmin hydrophobin family. As to quaternary structure, homotetramer. Further self-assembles to form highly ordered films at water-air interfaces through intermolecular interactions. As to expression, only appears on young aerial hyphae. HCf-5 is the most abundant transcript in sporulating mycelium.

It localises to the secreted. The protein localises to the cell wall. Its function is as follows. Aerial growth, conidiation, and dispersal of filamentous fungi in the environment rely upon a capability of their secreting small amphipathic proteins called hydrophobins (HPBs) with low sequence identity. Class I can self-assemble into an outermost layer of rodlet bundles on aerial cell surfaces, conferring cellular hydrophobicity that supports fungal growth, development and dispersal; whereas Class II form highly ordered films at water-air interfaces through intermolecular interactions but contribute nothing to the rodlet structure. The protein is Class II hydrophobin 5 of Passalora fulva (Tomato leaf mold).